We begin with the raw amino-acid sequence, 449 residues long: Cytochrome P450 2E1 (449 aa).

Position 254–259 (254–259) interacts with substrate; it reads FAGTET. Residue Cys393 coordinates heme.

Belongs to the cytochrome P450 family. Interacts with chaperones HSP70 and HSP90; this interaction is required for initial targeting to mitochondria. The cofactor is heme.

The protein resides in the endoplasmic reticulum membrane. The protein localises to the microsome membrane. It localises to the mitochondrion inner membrane. The enzyme catalyses an organic molecule + reduced [NADPH--hemoprotein reductase] + O2 = an alcohol + oxidized [NADPH--hemoprotein reductase] + H2O + H(+). The catalysed reaction is (5Z,8Z,11Z)-eicosatrienoate + reduced [NADPH--hemoprotein reductase] + O2 = 19-hydroxy-(5Z,8Z,11Z)-eicosatrienoate + oxidized [NADPH--hemoprotein reductase] + H2O + H(+). It catalyses the reaction (5Z,8Z,11Z,14Z,17Z)-eicosapentaenoate + reduced [NADPH--hemoprotein reductase] + O2 = 19-hydroxy-(5Z,8Z,11Z,14Z,17Z)-eicosapentaenoate + oxidized [NADPH--hemoprotein reductase] + H2O + H(+). It carries out the reaction (4Z,7Z,10Z,13Z,16Z,19Z)-docosahexaenoate + reduced [NADPH--hemoprotein reductase] + O2 = 21-hydroxy-(4Z,7Z,10Z,13Z,16Z,19Z)-docosahexaenoate + oxidized [NADPH--hemoprotein reductase] + H2O + H(+). The enzyme catalyses dodecanoate + reduced [NADPH--hemoprotein reductase] + O2 = 11-hydroxydodecanoate + oxidized [NADPH--hemoprotein reductase] + H2O + H(+). The catalysed reaction is tetradecanoate + reduced [NADPH--hemoprotein reductase] + O2 = 13-hydroxytetradecanoate + oxidized [NADPH--hemoprotein reductase] + H2O + H(+). It catalyses the reaction 4-nitrophenol + NADPH + O2 + H(+) = 4-nitrocatechol + NADP(+) + H2O. It participates in lipid metabolism; fatty acid metabolism. With respect to regulation, the omega-1 hydroxylase activity is stimulated by cytochrome b5. A cytochrome P450 monooxygenase involved in the metabolism of fatty acids. Mechanistically, uses molecular oxygen inserting one oxygen atom into a substrate, and reducing the second into a water molecule, with two electrons provided by NADPH via cytochrome P450 reductase (NADPH--hemoprotein reductase). Catalyzes the hydroxylation of carbon-hydrogen bonds. Hydroxylates fatty acids specifically at the omega-1 position displaying the highest catalytic activity for saturated fatty acids. May be involved in the oxidative metabolism of xenobiotics. The sequence is that of Cytochrome P450 2E1 (CYP2E1) from Macaca fascicularis (Crab-eating macaque).